We begin with the raw amino-acid sequence, 330 residues long: MSHAGAIAALGVALIAAALFSAIHKIEEGHVGVYYRGGALLTTTSGPGFHLMLPFITSFKSVQSTLQTDEVKNVPCGTSGGVMIYFDRIEVVNYLISSAVYDIVKNYTADYDKALIFNKIHHELNQFCSVHNLQEVYIELFDQIDEDLKLALQKDLNLMAPGIIIQAVRVTKPNIPEAIRRNYELMESEKTKLLIAAQKQKVVEKEAETERKKAIIEAEKVAQVAQIKYGQKVMEKETEKKISEIEDFAFLAREKARADAEYYTAQKAAEANKLKLTPEYLQLMKYQAIAANSKIYFGQDIPNMFMDSSSAGPRVQSAKRNEPAAAEELK.

At Met-1–Ser-2 the chain is on the cytoplasmic side. Residues His-3 to Ile-23 traverse the membrane as a helical segment. Residues His-24–Lys-330 are Lumenal-facing. N-linked (GlcNAc...) asparagine glycosylation is present at Asn-106. The disordered stretch occupies residues Ser-308 to Lys-330. Basic and acidic residues predominate over residues Lys-319–Lys-330.

It belongs to the band 7/mec-2 family.

It is found in the endoplasmic reticulum membrane. In terms of biological role, mediates the endoplasmic reticulum-associated degradation (ERAD) of inositol 1,4,5-trisphosphate receptors (IP3Rs). Promotes sterol-accelerated ERAD of HMGCR. Involved in regulation of cellular cholesterol homeostasis by regulation the SREBP signaling pathway. The polypeptide is Erlin-2-B (erlin2-b) (Xenopus laevis (African clawed frog)).